The chain runs to 494 residues: Probable cytosol aminopeptidase (494 aa).

Mn(2+) contacts are provided by Lys264 and Asp269. Lys276 is a catalytic residue. 3 residues coordinate Mn(2+): Asp287, Asp346, and Glu348. Residue Arg350 is part of the active site.

The protein belongs to the peptidase M17 family. The cofactor is Mn(2+).

It is found in the cytoplasm. The catalysed reaction is Release of an N-terminal amino acid, Xaa-|-Yaa-, in which Xaa is preferably Leu, but may be other amino acids including Pro although not Arg or Lys, and Yaa may be Pro. Amino acid amides and methyl esters are also readily hydrolyzed, but rates on arylamides are exceedingly low.. The enzyme catalyses Release of an N-terminal amino acid, preferentially leucine, but not glutamic or aspartic acids.. In terms of biological role, presumably involved in the processing and regular turnover of intracellular proteins. Catalyzes the removal of unsubstituted N-terminal amino acids from various peptides. This chain is Probable cytosol aminopeptidase (pepA), found in Pasteurella multocida (strain Pm70).